The primary structure comprises 325 residues: 6-phosphogluconolactonase 3, chloroplastic (325 aa).

The N-terminal 68 residues, 1–68 (MASSSCFLRS…KSSDTRRKVK (68 aa)), are a transit peptide targeting the chloroplast. The tract at residues 51–73 (SIGTGSTKKSSDTRRKVKSMATT) is disordered. The Microbody targeting signal motif lies at 323-325 (SKL).

Belongs to the glucosamine/galactosamine-6-phosphate isomerase family. 6-phosphogluconolactonase subfamily. Interacts with TRXM2. As to expression, expressed in roots, leaves and shoots.

Its subcellular location is the plastid. The protein resides in the chloroplast. The protein localises to the peroxisome. The enzyme catalyses 6-phospho-D-glucono-1,5-lactone + H2O = 6-phospho-D-gluconate + H(+). It functions in the pathway carbohydrate degradation; pentose phosphate pathway; D-ribulose 5-phosphate from D-glucose 6-phosphate (oxidative stage): step 2/3. Its function is as follows. Catalyzes the hydrolysis of 6-phosphogluconolactone to 6-phosphogluconate. Involved in the regulation of cellular redox state; enzymatic activity is required for this function. Required for sugar-dependent expression of nitrate assimilation genes in the nucleus of root cells. This Arabidopsis thaliana (Mouse-ear cress) protein is 6-phosphogluconolactonase 3, chloroplastic.